The sequence spans 103 residues: Large ribosomal subunit protein bL21 (103 aa).

The protein belongs to the bacterial ribosomal protein bL21 family. As to quaternary structure, part of the 50S ribosomal subunit. Contacts protein L20.

In terms of biological role, this protein binds to 23S rRNA in the presence of protein L20. The polypeptide is Large ribosomal subunit protein bL21 (Colwellia psychrerythraea (strain 34H / ATCC BAA-681) (Vibrio psychroerythus)).